Here is a 476-residue protein sequence, read N- to C-terminus: Bifunctional protein HldE (476 aa).

The ribokinase stretch occupies residues methionine 1 to threonine 318. Residue asparagine 195–glutamate 198 participates in ATP binding. The active site involves aspartate 264. The interval methionine 344–glutamine 476 is cytidylyltransferase.

In the N-terminal section; belongs to the carbohydrate kinase PfkB family. It in the C-terminal section; belongs to the cytidylyltransferase family. In terms of assembly, homodimer.

The catalysed reaction is D-glycero-beta-D-manno-heptose 7-phosphate + ATP = D-glycero-beta-D-manno-heptose 1,7-bisphosphate + ADP + H(+). It carries out the reaction D-glycero-beta-D-manno-heptose 1-phosphate + ATP + H(+) = ADP-D-glycero-beta-D-manno-heptose + diphosphate. It functions in the pathway nucleotide-sugar biosynthesis; ADP-L-glycero-beta-D-manno-heptose biosynthesis; ADP-L-glycero-beta-D-manno-heptose from D-glycero-beta-D-manno-heptose 7-phosphate: step 1/4. It participates in nucleotide-sugar biosynthesis; ADP-L-glycero-beta-D-manno-heptose biosynthesis; ADP-L-glycero-beta-D-manno-heptose from D-glycero-beta-D-manno-heptose 7-phosphate: step 3/4. Catalyzes the phosphorylation of D-glycero-D-manno-heptose 7-phosphate at the C-1 position to selectively form D-glycero-beta-D-manno-heptose-1,7-bisphosphate. Its function is as follows. Catalyzes the ADP transfer from ATP to D-glycero-beta-D-manno-heptose 1-phosphate, yielding ADP-D-glycero-beta-D-manno-heptose. This is Bifunctional protein HldE from Enterobacter sp. (strain 638).